The sequence spans 342 residues: GTPase Obg (342 aa).

Residues 1 to 159 (MKFLDLCKVY…RTIWLRLKLI (159 aa)) enclose the Obg domain. In terms of domain architecture, OBG-type G spans 160 to 327 (ADAGLLGLPN…VLRALWAEID (168 aa)). Residues 166 to 173 (GLPNAGKS), 191 to 195 (FTTLV), 212 to 215 (DIPG), 279 to 282 (NKID), and 308 to 310 (SGV) each bind GTP. Positions 173 and 193 each coordinate Mg(2+).

Belongs to the TRAFAC class OBG-HflX-like GTPase superfamily. OBG GTPase family. As to quaternary structure, monomer. Requires Mg(2+) as cofactor.

It is found in the cytoplasm. Functionally, an essential GTPase which binds GTP, GDP and possibly (p)ppGpp with moderate affinity, with high nucleotide exchange rates and a fairly low GTP hydrolysis rate. Plays a role in control of the cell cycle, stress response, ribosome biogenesis and in those bacteria that undergo differentiation, in morphogenesis control. The sequence is that of GTPase Obg from Cereibacter sphaeroides (strain ATCC 17029 / ATH 2.4.9) (Rhodobacter sphaeroides).